The sequence spans 490 residues: Cytochrome P450 2C1 (490 aa).

Cysteine 435 lines the heme pocket.

It belongs to the cytochrome P450 family. It depends on heme as a cofactor.

The protein resides in the endoplasmic reticulum membrane. The protein localises to the microsome membrane. The catalysed reaction is an organic molecule + reduced [NADPH--hemoprotein reductase] + O2 = an alcohol + oxidized [NADPH--hemoprotein reductase] + H2O + H(+). Functionally, cytochromes P450 are a group of heme-thiolate monooxygenases. In liver microsomes, this enzyme is involved in an NADPH-dependent electron transport pathway. It oxidizes a variety of structurally unrelated compounds, including steroids, fatty acids, and xenobiotics. This chain is Cytochrome P450 2C1 (CYP2C1), found in Oryctolagus cuniculus (Rabbit).